Consider the following 979-residue polypeptide: MSIKLFSLAKELNVGVGSLAGFLRKKGFDVEDNNPNVRIENEEFDLLLTEFGKSLPKGEAERIRKKFVKQKQGTPASAPSAKEETAGMAAKEAQVIATEVPQDMRPRFTIKGKVETEKPAEPVPSPKDKEPDTVREDKPARETAPVKEETKVVPVKEDKPKEEKPKQEEPKREEPKPEEPVQAAPVAKPVEKPVDKPQQPVMTQKPQEAETPPPAQEMEKKEDTEEVFRLKTNTQEPQVKVVGKIDLSSINSSTRPKKKTKEDRQREQNDADGKKKRKRINKAAVDVKKEAAKVSGEQGKRNAGGGNHPSGNKNNNRPAQQQSNASGGRKNNKRQSLPPKVEISDEDVQRQVKETLARLTTKKTSTTLGRGAKYRKDKRDAASRAAQDAMELNSEEQHTLKLTEFVTVSDLSNMMDVPVNEVIATCMSIGMMVGINQRLDAETINIVAEEFGFKTEFVSADLVEAIAPEEDNEEDLVARPPIVTVMGHVDHGKTSLLDRIRNTNVIEGEAGGITQHIGAYGLKLPSGRRITFLDTPGHEAFTAMRARGAKITDIAIIIVAADDDVMPQTVEAINHASAAGVPMVFAINKIDKPAANPERIKEQLANMNYLVEDWGGKYQSQEISAKKGINITELLEKVLLEADILELKANPNRRAIGSIIESSLDKGRGYVSTVMVQNGTLNMGDVVLAGTCHGRIKAMFNERNQRVKQAGPSEPVLILGLNGAPAAGDTFNVLETEQEAREIANRREQLQREQGLRTHKILTLEDISRRRAIGNFQELNLIVKGDVDGSVEALSDSLIRLSTEEIQVNVIHKAVGQISESDVVLAAASSAIIIGFQVRPSVAARKQAETDGVEIRTYSIIYDTIEDIKSAMEGMLSPEIREEVTGSLEVLQTFKISKVGTIAGCMVKEGKVKRTSKVRLIRDGIVIHTGELGSLKRFKDDAKEVVAGLECGLNLAHSNDIQDGDIIEAFDEIEIKKTL.

Positions 68–392 (VKQKQGTPAS…SRAAQDAMEL (325 aa)) are disordered. Basic and acidic residues-rich tracts occupy residues 102-179 (QDMR…KPEE), 217-229 (EMEK…EVFR), and 260-273 (TKED…DADG). Positions 309 to 326 (PSGNKNNNRPAQQQSNAS) are enriched in polar residues. Positions 347–356 (DVQRQVKETL) are enriched in basic and acidic residues. One can recognise a tr-type G domain in the interval 478–646 (ARPPIVTVMG…KVLLEADILE (169 aa)). Residues 487–494 (GHVDHGKT) form a G1 region. 487–494 (GHVDHGKT) is a GTP binding site. The tract at residues 512-516 (GITQH) is G2. The tract at residues 534 to 537 (DTPG) is G3. GTP-binding positions include 534–538 (DTPGH) and 588–591 (NKID). Residues 588–591 (NKID) form a G4 region. The tract at residues 624–626 (SAK) is G5.

Belongs to the TRAFAC class translation factor GTPase superfamily. Classic translation factor GTPase family. IF-2 subfamily.

Its subcellular location is the cytoplasm. Its function is as follows. One of the essential components for the initiation of protein synthesis. Protects formylmethionyl-tRNA from spontaneous hydrolysis and promotes its binding to the 30S ribosomal subunits. Also involved in the hydrolysis of GTP during the formation of the 70S ribosomal complex. The chain is Translation initiation factor IF-2 from Porphyromonas gingivalis (strain ATCC 33277 / DSM 20709 / CIP 103683 / JCM 12257 / NCTC 11834 / 2561).